The following is a 338-amino-acid chain: Glycerol-3-phosphate dehydrogenase [NAD(P)+] (338 aa).

NADPH-binding residues include Trp11, Arg30, and Lys109. Residues Lys109, Gly143, and Ser145 each contribute to the sn-glycerol 3-phosphate site. Ala147 lines the NADPH pocket. Residues Lys198, Asp251, Ser261, Arg262, and Asn263 each coordinate sn-glycerol 3-phosphate. Residue Lys198 is the Proton acceptor of the active site. Arg262 provides a ligand contact to NADPH. Residues Val286 and Glu288 each contribute to the NADPH site.

The protein belongs to the NAD-dependent glycerol-3-phosphate dehydrogenase family.

Its subcellular location is the cytoplasm. It catalyses the reaction sn-glycerol 3-phosphate + NAD(+) = dihydroxyacetone phosphate + NADH + H(+). The catalysed reaction is sn-glycerol 3-phosphate + NADP(+) = dihydroxyacetone phosphate + NADPH + H(+). Its pathway is membrane lipid metabolism; glycerophospholipid metabolism. Catalyzes the reduction of the glycolytic intermediate dihydroxyacetone phosphate (DHAP) to sn-glycerol 3-phosphate (G3P), the key precursor for phospholipid synthesis. The protein is Glycerol-3-phosphate dehydrogenase [NAD(P)+] of Cupriavidus taiwanensis (strain DSM 17343 / BCRC 17206 / CCUG 44338 / CIP 107171 / LMG 19424 / R1) (Ralstonia taiwanensis (strain LMG 19424)).